Reading from the N-terminus, the 55-residue chain is Photosystem II reaction center protein K (55 aa).

The propeptide occupies 1–18 (MFNIYLENAFYLNGITFA). A helical membrane pass occupies residues 26 to 46 (IFDPIVDVMPIIPLFFFLLAF).

It belongs to the PsbK family. In terms of assembly, PSII is composed of 1 copy each of membrane proteins PsbA, PsbB, PsbC, PsbD, PsbE, PsbF, PsbH, PsbI, PsbJ, PsbK, PsbL, PsbM, PsbT, PsbX, PsbY, PsbZ, Psb30/Ycf12, at least 3 peripheral proteins of the oxygen-evolving complex and a large number of cofactors. It forms dimeric complexes.

It localises to the plastid. The protein resides in the chloroplast thylakoid membrane. Its function is as follows. One of the components of the core complex of photosystem II (PSII). PSII is a light-driven water:plastoquinone oxidoreductase that uses light energy to abstract electrons from H(2)O, generating O(2) and a proton gradient subsequently used for ATP formation. It consists of a core antenna complex that captures photons, and an electron transfer chain that converts photonic excitation into a charge separation. This is Photosystem II reaction center protein K from Marchantia polymorpha (Common liverwort).